The sequence spans 181 residues: Early upstream open reading frame (181 aa).

It belongs to the EUO family.

The protein is Early upstream open reading frame of Chlamydia caviae (strain ATCC VR-813 / DSM 19441 / 03DC25 / GPIC) (Chlamydophila caviae).